The following is a 538-amino-acid chain: BTB/POZ domain-containing protein 6 (538 aa).

Positions 1–17 (MLLPLACLHGRVAQCLT) are cleaved as a signal peptide. Disordered regions lie at residues 29–53 (PRRG…PPAK) and 76–115 (AAVG…SPGW). Residues 35-53 (ARGAASTGAEAAPAAPPAK) show a composition bias toward low complexity. The segment covering 85–103 (RSPPSAPAPAPPPPAPAPP) has biased composition (pro residues). The 71-residue stretch at 136–206 (ADVHFVVGPP…MYSDEIDLEA (71 aa)) folds into the BTB domain.

Expressed in lens.

The protein localises to the cytoplasm. In terms of biological role, adapter protein for the cul3 E3 ubiquitin-protein ligase complex. Involved in late neuronal development and muscle formation. The protein is BTB/POZ domain-containing protein 6 of Homo sapiens (Human).